The primary structure comprises 620 residues: Glutathione-regulated potassium-efflux system protein KefC (620 aa).

Helical transmembrane passes span 4–24 (HTLI…PIAV), 26–46 (LGLG…PWGL), 54–74 (SILH…GLEL), 90–110 (GALQ…FLGL), 114–134 (VAEL…MQAM), 149–169 (FAVL…IPLL), 178–198 (MGAF…VVLL), 218–238 (VFSA…EEVG), 270–290 (GLLL…GTLL), 294–314 (LRIV…LWLI), 327–347 (WFAV…GAAQ), and 359–379 (SLTL…VILN). In terms of domain architecture, RCK N-terminal spans 399-518 (QPRVIIAGFG…AGVEKPERET (120 aa)). The segment at 597 to 620 (GWQGTEEGKHTGNMADEPETKPSS) is disordered.

It belongs to the monovalent cation:proton antiporter 2 (CPA2) transporter (TC 2.A.37) family. KefC subfamily. As to quaternary structure, homodimer. Interacts with the regulatory subunit KefF.

It is found in the cell inner membrane. Its function is as follows. Pore-forming subunit of a potassium efflux system that confers protection against electrophiles. Catalyzes K(+)/H(+) antiport. The sequence is that of Glutathione-regulated potassium-efflux system protein KefC from Escherichia fergusonii (strain ATCC 35469 / DSM 13698 / CCUG 18766 / IAM 14443 / JCM 21226 / LMG 7866 / NBRC 102419 / NCTC 12128 / CDC 0568-73).